We begin with the raw amino-acid sequence, 230 residues long: MTTNTVPLHPYWPRHLKLDNFVPNDLPTSHILVGLFSISGGLIVITWLLSSRASVVPLGAGRRLALCWFAVCTFIHLVIEGWFSLYNGILLEDQAFLSQLWKEYSKGDSRYILSDSFVVCMETVTACLWGPLSLWVVIAFLRQQPFRFVLQLVVSMGQIYGDVLYFLTELHEGLQHGEIGHPVYFWFYFVFLNAVWLVIPSILVLDAIKHLTSAQSVLDSKVMKIKSKHN.

Threonine 2 bears the N-acetylthreonine mark. 4 consecutive transmembrane segments (helical) span residues serine 29–leucine 49, leucine 66–tyrosine 86, methionine 121–leucine 141, and phenylalanine 185–leucine 205. The 144-residue stretch at glycine 61–valine 204 folds into the EXPERA domain.

This sequence belongs to the EBP family.

The protein resides in the endoplasmic reticulum membrane. It localises to the nucleus envelope. It is found in the cytoplasmic vesicle. The enzyme catalyses lathosterol = 5alpha-cholest-8-en-3beta-ol. The catalysed reaction is zymosterol = 5alpha-cholesta-7,24-dien-3beta-ol. It catalyses the reaction 5,6alpha-epoxy-5alpha-cholestan-3beta-ol + H2O = 5alpha-cholestane-3beta,5,6beta-triol. It carries out the reaction 5,6beta-epoxy-5beta-cholestan-3beta-ol + H2O = 5alpha-cholestane-3beta,5,6beta-triol. Its pathway is steroid biosynthesis; cholesterol biosynthesis. Its function is as follows. Isomerase that catalyzes the conversion of Delta(8)-sterols to their corresponding Delta(7)-isomers. In terms of biological role, component of the microsomal antiestrogen binding site (AEBS), a multiproteic complex at the ER membrane that consists of an association between EBP and 7-dehydrocholesterol reductase/DHCR7. This complex is responsible for cholesterol-5,6-epoxide hydrolase (ChEH) activity, which consists in the hydration of cholesterol-5,6-epoxides (5,6-EC) into cholestane-3beta,5alpha,6beta-triol (CT). The precise role of each component of this complex has not been described yet. This chain is 3-beta-hydroxysteroid-Delta(8),Delta(7)-isomerase, found in Mus musculus (Mouse).